A 669-amino-acid chain; its full sequence is DNA ligase (669 aa).

NAD(+) is bound by residues 34-38 (DAEYD), 83-84 (SL), and glutamate 114. The active-site N6-AMP-lysine intermediate is lysine 116. Arginine 137, glutamate 171, lysine 287, and lysine 311 together coordinate NAD(+). The Zn(2+) site is built by cysteine 405, cysteine 408, cysteine 423, and cysteine 428. Positions 591–669 (NVESYFAGKT…EERFLQELNK (79 aa)) constitute a BRCT domain.

The protein belongs to the NAD-dependent DNA ligase family. LigA subfamily. It depends on Mg(2+) as a cofactor. Mn(2+) serves as cofactor.

The enzyme catalyses NAD(+) + (deoxyribonucleotide)n-3'-hydroxyl + 5'-phospho-(deoxyribonucleotide)m = (deoxyribonucleotide)n+m + AMP + beta-nicotinamide D-nucleotide.. In terms of biological role, DNA ligase that catalyzes the formation of phosphodiester linkages between 5'-phosphoryl and 3'-hydroxyl groups in double-stranded DNA using NAD as a coenzyme and as the energy source for the reaction. It is essential for DNA replication and repair of damaged DNA. This chain is DNA ligase, found in Bacillus cereus (strain B4264).